The sequence spans 116 residues: Cuticle protein AM1274 (116 aa).

Gln-1 bears the Pyrrolidone carboxylic acid mark. The interval 1–22 (QLANEPPIEIIRQESTDNGDGN) is disordered. The 66-residue stretch at 20–85 (DGNFNFLFET…PVSDFIPTPH (66 aa)) folds into the Chitin-binding type R&amp;R domain. Thr-83 is a glycosylation site (O-linked (HexNAc) threonine).

As to expression, arthrodial membrane.

The polypeptide is Cuticle protein AM1274 (Cancer pagurus (Rock crab)).